Here is a 255-residue protein sequence, read N- to C-terminus: Triosephosphate isomerase (255 aa).

9–11 (NWK) contributes to the substrate binding site. H96 (electrophile) is an active-site residue. E170 (proton acceptor) is an active-site residue. Substrate contacts are provided by residues G176, S216, and 237–238 (GG).

This sequence belongs to the triosephosphate isomerase family. As to quaternary structure, homodimer.

The protein localises to the cytoplasm. It catalyses the reaction D-glyceraldehyde 3-phosphate = dihydroxyacetone phosphate. Its pathway is carbohydrate biosynthesis; gluconeogenesis. It functions in the pathway carbohydrate degradation; glycolysis; D-glyceraldehyde 3-phosphate from glycerone phosphate: step 1/1. Its function is as follows. Involved in the gluconeogenesis. Catalyzes stereospecifically the conversion of dihydroxyacetone phosphate (DHAP) to D-glyceraldehyde-3-phosphate (G3P). The sequence is that of Triosephosphate isomerase from Magnetococcus marinus (strain ATCC BAA-1437 / JCM 17883 / MC-1).